Consider the following 323-residue polypeptide: tRNA U34 carboxymethyltransferase (323 aa).

Carboxy-S-adenosyl-L-methionine contacts are provided by residues Lys-91, Trp-105, Lys-110, Gly-130, 152 to 154 (DPT), 181 to 182 (IE), Met-196, Tyr-200, and Arg-315.

This sequence belongs to the class I-like SAM-binding methyltransferase superfamily. CmoB family. In terms of assembly, homotetramer.

The enzyme catalyses carboxy-S-adenosyl-L-methionine + 5-hydroxyuridine(34) in tRNA = 5-carboxymethoxyuridine(34) in tRNA + S-adenosyl-L-homocysteine + H(+). In terms of biological role, catalyzes carboxymethyl transfer from carboxy-S-adenosyl-L-methionine (Cx-SAM) to 5-hydroxyuridine (ho5U) to form 5-carboxymethoxyuridine (cmo5U) at position 34 in tRNAs. The chain is tRNA U34 carboxymethyltransferase from Escherichia coli O81 (strain ED1a).